The primary structure comprises 1445 residues: Spermatogenesis-associated protein 31E1 (1445 aa).

A helical membrane pass occupies residues 64–84; sequence WMMDFILTSVCGLVLLFLLLL. Disordered stretches follow at residues 90-115 and 169-262; these read PPSPPPGRKRSSREPQRERSGRSRSR and VPAK…PDSS. Over residues 101–110 the composition is skewed to basic and acidic residues; sequence SREPQRERSG. Residues 241-260 are compositionally biased toward pro residues; sequence VFPPSPQPHGPLASSPPPPD. N-linked (GlcNAc...) asparagine glycosylation occurs at Asn-408. 4 disordered regions span residues 411 to 430, 460 to 557, 592 to 619, and 637 to 761; these read TQPQQLPRPQQVSDATTVGN, NPSS…ERTQ, LSQPTAHLPQERPASWSPKSAPILPGVV, and QEQS…KEHL. Over residues 664–681 the composition is skewed to polar residues; sequence PQSQAEDTQQALLPSQPS. Asn-819, Asn-906, and Asn-1160 each carry an N-linked (GlcNAc...) asparagine glycan. Disordered stretches follow at residues 894–966, 1143–1242, 1254–1280, and 1378–1445; these read FLGK…TCSL, RLPT…IGDK, KGQTPPESHFQRKISHHPQGLHPRKGG, and SPKA…CLAS. Polar residues-rich tracts occupy residues 906-915 and 1148-1165; these read NRTTSKSVPT and APLSTSQSVSGKNMTASQ. The segment covering 1202-1217 has biased composition (basic and acidic residues); that stretch reads DKGEAHRRPRTGEQGH.

This sequence belongs to the SPATA31 family.

It is found in the membrane. Its function is as follows. May play a role in spermatogenesis. The protein is Spermatogenesis-associated protein 31E1 (SPATA31E1) of Homo sapiens (Human).